A 355-amino-acid chain; its full sequence is Phosphoribosylformylglycinamidine cyclo-ligase (355 aa).

This sequence belongs to the AIR synthase family.

It localises to the cytoplasm. It catalyses the reaction 2-formamido-N(1)-(5-O-phospho-beta-D-ribosyl)acetamidine + ATP = 5-amino-1-(5-phospho-beta-D-ribosyl)imidazole + ADP + phosphate + H(+). The protein operates within purine metabolism; IMP biosynthesis via de novo pathway; 5-amino-1-(5-phospho-D-ribosyl)imidazole from N(2)-formyl-N(1)-(5-phospho-D-ribosyl)glycinamide: step 2/2. The polypeptide is Phosphoribosylformylglycinamidine cyclo-ligase (Paraburkholderia xenovorans (strain LB400)).